A 98-amino-acid polypeptide reads, in one-letter code: Acylphosphatase-1 (98 aa).

Residues 8-98 (SVDYEVFGKV…LEHSTFSICK (91 aa)) enclose the Acylphosphatase-like domain. Residues arginine 23 and asparagine 41 contribute to the active site.

The protein belongs to the acylphosphatase family.

It carries out the reaction an acyl phosphate + H2O = a carboxylate + phosphate + H(+). The chain is Acylphosphatase-1 (acyp1) from Xenopus tropicalis (Western clawed frog).